A 333-amino-acid chain; its full sequence is MRTIAIDAMGGDNAPEAIVEAVLKAKAEMPDTKFLLFGDKEQLRKLIPSDQINDQLGVVATTEIIADEDEPVKAIRRKKDSSMVVAANFVKEGKADALLSLGNTGALLACGIFIIGRIKGIARPGLMPTLPVQNSDDGFNMVDVGANAKSKPEFLLQWAEMASYYAEKIRGIQNPRIMLLNNGSESDKGDDVHQAAYELLKDSDLNFQGNIEGNELLLGKADVVVTDGFTGNAVLKNIEGTSSFILHILKDSLLNGGVMTKLGALMVNGSLSSLKSKFDTAKYGGAILLGVNAPVVKTHGRSNESPIYFTLKQVDKMIKENLVQDFKDEFATK.

The protein belongs to the PlsX family. In terms of assembly, homodimer. Probably interacts with PlsY.

The protein localises to the cytoplasm. It catalyses the reaction a fatty acyl-[ACP] + phosphate = an acyl phosphate + holo-[ACP]. Its pathway is lipid metabolism; phospholipid metabolism. Catalyzes the reversible formation of acyl-phosphate (acyl-PO(4)) from acyl-[acyl-carrier-protein] (acyl-ACP). This enzyme utilizes acyl-ACP as fatty acyl donor, but not acyl-CoA. This is Phosphate acyltransferase from Lactobacillus helveticus (strain DPC 4571).